Reading from the N-terminus, the 231-residue chain is RNA pyrophosphohydrolase (231 aa).

In terms of domain architecture, Nudix hydrolase spans glycine 6–threonine 149. Residues glycine 38–glycine 59 carry the Nudix box motif. The disordered stretch occupies residues arginine 157 to alanine 190.

The protein belongs to the Nudix hydrolase family. RppH subfamily. Requires a divalent metal cation as cofactor.

Its function is as follows. Accelerates the degradation of transcripts by removing pyrophosphate from the 5'-end of triphosphorylated RNA, leading to a more labile monophosphorylated state that can stimulate subsequent ribonuclease cleavage. The protein is RNA pyrophosphohydrolase of Paraburkholderia phymatum (strain DSM 17167 / CIP 108236 / LMG 21445 / STM815) (Burkholderia phymatum).